Consider the following 217-residue polypeptide: Melanocortin-2 receptor accessory protein 2A (217 aa).

The N-linked (GlcNAc...) asparagine glycan is linked to asparagine 8. A helical transmembrane segment spans residues 42–62 (IVIGFWVGLAVFVIFMFFVLT).

Belongs to the MRAP family. In terms of assembly, interacts with mc4r.

It is found in the cell membrane. The protein resides in the endoplasmic reticulum membrane. Functionally, inhibitor of melanocortin receptor 4 (mc4r), a receptor involved in energy homeostasis. Plays a role during larval development in the control of energy homeostasis and body weight regulation by decreasing ligand-sensitivity of mc4r and mc4r-mediated generation of cAMP, leading to stimulate growth during larval development. Acts by stabilizing an inactive conformation of mc4r during embryonic development, when all the energy consumed is obtained from the yolk sac, possibly to speed the rapid maturation to the mobile free-feeding juvenile stage reached at 5 dpf. The polypeptide is Melanocortin-2 receptor accessory protein 2A (mrap2a) (Danio rerio (Zebrafish)).